A 387-amino-acid polypeptide reads, in one-letter code: 1-deoxy-D-xylulose 5-phosphate reductoisomerase (387 aa).

NADPH contacts are provided by Thr-10, Gly-11, Ser-12, Val-13, Asn-38, and Asn-119. Lys-120 contacts 1-deoxy-D-xylulose 5-phosphate. Glu-121 provides a ligand contact to NADPH. Position 145 (Asp-145) interacts with Mn(2+). Residues Ser-146, Glu-147, Ser-170, and His-193 each coordinate 1-deoxy-D-xylulose 5-phosphate. Glu-147 is a binding site for Mn(2+). Residue Gly-199 coordinates NADPH. Residues Ser-206, Asn-211, Lys-212, and Glu-215 each coordinate 1-deoxy-D-xylulose 5-phosphate. A Mn(2+)-binding site is contributed by Glu-215.

It belongs to the DXR family. Requires Mg(2+) as cofactor. The cofactor is Mn(2+).

It carries out the reaction 2-C-methyl-D-erythritol 4-phosphate + NADP(+) = 1-deoxy-D-xylulose 5-phosphate + NADPH + H(+). It participates in isoprenoid biosynthesis; isopentenyl diphosphate biosynthesis via DXP pathway; isopentenyl diphosphate from 1-deoxy-D-xylulose 5-phosphate: step 1/6. Functionally, catalyzes the NADPH-dependent rearrangement and reduction of 1-deoxy-D-xylulose-5-phosphate (DXP) to 2-C-methyl-D-erythritol 4-phosphate (MEP). The protein is 1-deoxy-D-xylulose 5-phosphate reductoisomerase of Wolbachia pipientis wMel.